A 340-amino-acid polypeptide reads, in one-letter code: Eukaryotic translation initiation factor 3 subunit I (340 aa).

5 WD repeats span residues 8-47 (GHER…RLGT), 50-91 (GHQG…KVWD), 150-189 (CTES…QLEN), 194-233 (EFDH…ILKT), and 291-330 (GHFG…FDFM).

The protein belongs to the eIF-3 subunit I family. Component of the eukaryotic translation initiation factor 3 (eIF-3) complex.

It localises to the cytoplasm. Functionally, component of the eukaryotic translation initiation factor 3 (eIF-3) complex, which is involved in protein synthesis of a specialized repertoire of mRNAs and, together with other initiation factors, stimulates binding of mRNA and methionyl-tRNAi to the 40S ribosome. The eIF-3 complex specifically targets and initiates translation of a subset of mRNAs involved in cell proliferation. The chain is Eukaryotic translation initiation factor 3 subunit I (tif34) from Neosartorya fischeri (strain ATCC 1020 / DSM 3700 / CBS 544.65 / FGSC A1164 / JCM 1740 / NRRL 181 / WB 181) (Aspergillus fischerianus).